The sequence spans 389 residues: viridiflorene synthase Agr2 (389 aa).

Positions 1–15 (MVWDFVLSLFHSLLA) are cleaved as a signal peptide. Residues aspartate 128, asparagine 263, serine 267, and glutamate 271 each coordinate Mg(2+). The DDXXD motif signature appears at 128 to 132 (DEVTD). Positions 360 and 361 each coordinate (2E,6E)-farnesyl diphosphate.

This sequence belongs to the terpene synthase family. Requires Mg(2+) as cofactor.

The enzyme catalyses (2E,6E)-farnesyl diphosphate = viridiflorene + diphosphate. Functionally, terpene cyclase that catalyzes the cyclization of farnesyl diphosphate (FPP) to viridiflorene. The polypeptide is viridiflorene synthase Agr2 (Cyclocybe aegerita (Black poplar mushroom)).